The primary structure comprises 307 residues: Quinolinate synthase (307 aa).

Residues H23 and S40 each coordinate iminosuccinate. C86 is a [4Fe-4S] cluster binding site. Iminosuccinate is bound by residues 112–114 (YVN) and S129. A [4Fe-4S] cluster-binding site is contributed by C173. Iminosuccinate is bound by residues 199–201 (HPE) and T216. Position 265 (C265) interacts with [4Fe-4S] cluster.

This sequence belongs to the quinolinate synthase family. Type 2 subfamily. It depends on [4Fe-4S] cluster as a cofactor.

It is found in the cytoplasm. The catalysed reaction is iminosuccinate + dihydroxyacetone phosphate = quinolinate + phosphate + 2 H2O + H(+). Its pathway is cofactor biosynthesis; NAD(+) biosynthesis; quinolinate from iminoaspartate: step 1/1. Catalyzes the condensation of iminoaspartate with dihydroxyacetone phosphate to form quinolinate. This chain is Quinolinate synthase, found in Methanocaldococcus jannaschii (strain ATCC 43067 / DSM 2661 / JAL-1 / JCM 10045 / NBRC 100440) (Methanococcus jannaschii).